The primary structure comprises 77 residues: uncharacterized protein (77 aa).

The protein resides in the plastid. The protein localises to the cyanelle. This is an uncharacterized protein from Cyanophora paradoxa.